A 304-amino-acid polypeptide reads, in one-letter code: Light-independent protochlorophyllide reductase iron-sulfur ATP-binding protein (304 aa).

ATP-binding positions include 46-51 (GIGKST) and Lys-75. Ser-50 contributes to the Mg(2+) binding site. Residues Cys-131 and Cys-165 each contribute to the [4Fe-4S] cluster site. Residues 216 to 217 (NR) and 240 to 242 (PDL) each bind ATP.

This sequence belongs to the NifH/BchL/ChlL family. Homodimer. Protochlorophyllide reductase is composed of three subunits; BchL, BchN and BchB. The cofactor is [4Fe-4S] cluster.

It carries out the reaction chlorophyllide a + oxidized 2[4Fe-4S]-[ferredoxin] + 2 ADP + 2 phosphate = protochlorophyllide a + reduced 2[4Fe-4S]-[ferredoxin] + 2 ATP + 2 H2O. It participates in porphyrin-containing compound metabolism; bacteriochlorophyll biosynthesis (light-independent). Functionally, component of the dark-operative protochlorophyllide reductase (DPOR) that uses Mg-ATP and reduced ferredoxin to reduce ring D of protochlorophyllide (Pchlide) to form chlorophyllide a (Chlide). This reaction is light-independent. The L component serves as a unique electron donor to the NB-component of the complex, and binds Mg-ATP. The polypeptide is Light-independent protochlorophyllide reductase iron-sulfur ATP-binding protein (Rhodobacter capsulatus (strain ATCC BAA-309 / NBRC 16581 / SB1003)).